A 156-amino-acid polypeptide reads, in one-letter code: Transcription antitermination protein NusB (156 aa).

It belongs to the NusB family.

Involved in transcription antitermination. Required for transcription of ribosomal RNA (rRNA) genes. Binds specifically to the boxA antiterminator sequence of the ribosomal RNA (rrn) operons. The polypeptide is Transcription antitermination protein NusB (Bartonella tribocorum (strain CIP 105476 / IBS 506)).